Reading from the N-terminus, the 340-residue chain is UDP-3-O-(3-hydroxymyristoyl)glucosamine N-acyltransferase (340 aa).

Catalysis depends on histidine 239, which acts as the Proton acceptor.

This sequence belongs to the transferase hexapeptide repeat family. LpxD subfamily. In terms of assembly, homotrimer.

The catalysed reaction is a UDP-3-O-[(3R)-3-hydroxyacyl]-alpha-D-glucosamine + a (3R)-hydroxyacyl-[ACP] = a UDP-2-N,3-O-bis[(3R)-3-hydroxyacyl]-alpha-D-glucosamine + holo-[ACP] + H(+). The enzyme catalyses UDP-3-O-[(3R)-3-hydroxytetradecanoyl]-alpha-D-glucosamine + (3R)-hydroxytetradecanoyl-[ACP] = UDP-2-N,3-O-bis[(3R)-3-hydroxytetradecanoyl]-alpha-D-glucosamine + holo-[ACP] + H(+). Its pathway is glycolipid biosynthesis; lipid IV(A) biosynthesis; lipid IV(A) from (3R)-3-hydroxytetradecanoyl-[acyl-carrier-protein] and UDP-N-acetyl-alpha-D-glucosamine: step 3/6. In terms of biological role, catalyzes the N-acylation of UDP-3-O-(hydroxytetradecanoyl)glucosamine using 3-hydroxytetradecanoyl-ACP as the acyl donor. Is involved in the biosynthesis of lipid A, a phosphorylated glycolipid that anchors the lipopolysaccharide to the outer membrane of the cell. This Wigglesworthia glossinidia brevipalpis protein is UDP-3-O-(3-hydroxymyristoyl)glucosamine N-acyltransferase.